A 184-amino-acid chain; its full sequence is dCTP deaminase (184 aa).

Residues 107–112 (KSTYAR), 131–133 (TLE), Gln-152, Tyr-166, and Gln-176 contribute to the dCTP site. Residue Glu-133 is the Proton donor/acceptor of the active site.

It belongs to the dCTP deaminase family. In terms of assembly, homotrimer.

The enzyme catalyses dCTP + H2O + H(+) = dUTP + NH4(+). It participates in pyrimidine metabolism; dUMP biosynthesis; dUMP from dCTP (dUTP route): step 1/2. Its function is as follows. Catalyzes the deamination of dCTP to dUTP. This Gemmatimonas aurantiaca (strain DSM 14586 / JCM 11422 / NBRC 100505 / T-27) protein is dCTP deaminase.